Here is a 216-residue protein sequence, read N- to C-terminus: Enolase-phosphatase E1 (216 aa).

Mg(2+) contacts are provided by Asp8 and Glu10. Substrate contacts are provided by residues 115–116 (SS) and Lys149. Asp172 lines the Mg(2+) pocket.

It belongs to the HAD-like hydrolase superfamily. MasA/MtnC family. As to quaternary structure, monomer. It depends on Mg(2+) as a cofactor.

The protein localises to the cytoplasm. The protein resides in the nucleus. It catalyses the reaction 5-methylsulfanyl-2,3-dioxopentyl phosphate + H2O = 1,2-dihydroxy-5-(methylsulfanyl)pent-1-en-3-one + phosphate. It functions in the pathway amino-acid biosynthesis; L-methionine biosynthesis via salvage pathway; L-methionine from S-methyl-5-thio-alpha-D-ribose 1-phosphate: step 3/6. It participates in amino-acid biosynthesis; L-methionine biosynthesis via salvage pathway; L-methionine from S-methyl-5-thio-alpha-D-ribose 1-phosphate: step 4/6. Its function is as follows. Bifunctional enzyme that catalyzes the enolization of 2,3-diketo-5-methylthiopentyl-1-phosphate (DK-MTP-1-P) into the intermediate 2-hydroxy-3-keto-5-methylthiopentenyl-1-phosphate (HK-MTPenyl-1-P), which is then dephosphorylated to form the acireductone 1,2-dihydroxy-3-keto-5-methylthiopentene (DHK-MTPene). In Schizosaccharomyces pombe (strain 972 / ATCC 24843) (Fission yeast), this protein is Enolase-phosphatase E1 (utr4).